We begin with the raw amino-acid sequence, 112 residues long: Large ribosomal subunit protein uL24 (112 aa).

It belongs to the universal ribosomal protein uL24 family. In terms of assembly, part of the 50S ribosomal subunit.

Its function is as follows. One of two assembly initiator proteins, it binds directly to the 5'-end of the 23S rRNA, where it nucleates assembly of the 50S subunit. Functionally, one of the proteins that surrounds the polypeptide exit tunnel on the outside of the subunit. The protein is Large ribosomal subunit protein uL24 of Magnetococcus marinus (strain ATCC BAA-1437 / JCM 17883 / MC-1).